The sequence spans 369 residues: Developmentally-regulated G-protein 3 (369 aa).

Positions 66–291 constitute an OBG-type G domain; it reads SRVGLVGFPS…LLDKIWEYLD (226 aa). Residues 72–79, 118–122, and 249–252 each bind GTP; these read GFPSVGKS, DLPGI, and NKID. The TGS domain maps to 291-367; it reads DLTRIYTKPK…EDEDVVQIVK (77 aa).

The protein belongs to the TRAFAC class OBG-HflX-like GTPase superfamily. OBG GTPase family.

Functionally, binds GDP and GTP, and has low GTPase activity in vitro. In Arabidopsis thaliana (Mouse-ear cress), this protein is Developmentally-regulated G-protein 3 (DRG3).